A 105-amino-acid polypeptide reads, in one-letter code: Acylphosphatase (105 aa).

The 90-residue stretch at 16–105 (RLTAWVRGRV…RGGYSGFTQA (90 aa)) folds into the Acylphosphatase-like domain. Residues Arg-31 and Asn-49 contribute to the active site.

It belongs to the acylphosphatase family.

It carries out the reaction an acyl phosphate + H2O = a carboxylate + phosphate + H(+). In Acidothermus cellulolyticus (strain ATCC 43068 / DSM 8971 / 11B), this protein is Acylphosphatase (acyP).